We begin with the raw amino-acid sequence, 2052 residues long: Unconventional myosin-X (2052 aa).

At M1 the chain carries N-acetylmethionine. A Myosin motor domain is found at E63–E739. ATP contacts are provided by residues N104, Y113, G160–E165, and N215. The interval L619 to M641 is actin-binding. IQ domains follow at residues V742–K763, K764–H787, and L788–A817. Residues E814 to E884 form an SAH region. The tract at residues E819 to R843 is disordered. Positions N885 to A935 form a coiled coil. Phosphoserine occurs at positions 963 and 966. A disordered region spans residues V964–G1093. Residues P988–A1003 show a composition bias toward acidic residues. Over residues V1040–S1049 the composition is skewed to polar residues. The segment covering G1081–D1092 has biased composition (acidic residues). T1152 carries the phosphothreonine modification. PH domains are found at residues E1206 to A1304 and E1386 to D1491. A MyTH4 domain is found at L1541–I1689. The FERM domain occupies M1694–R2038.

It belongs to the TRAFAC class myosin-kinesin ATPase superfamily. Myosin family. Monomer, when in an inactive conformation in the cytosol. Homodimer in its active, membrane-bound conformation; antiparallel coiled coil-mediated dimer formation. Interacts with ECPAS. Interacts with NEO 1. Interacts with VASP. Interacts with DCC and ITGB5; the presence of DCC inhibits ITGB5 binding. Interacts with tubulin; ITGB5 or DCC binding inhibits tubulin binding. Interacts strongly with CALM3 and weakly with CALM, the CALM3 interaction is essential for function in filopodial extension and motility. Interacts with ITGB1, ITGB3 and ITGB5. In terms of tissue distribution, detected in kidney, testis, liver, kidney, cerebellum and brain cortex (at protein level).

It is found in the cytoplasm. It localises to the cytosol. The protein localises to the cell projection. Its subcellular location is the lamellipodium. The protein resides in the ruffle. It is found in the cytoskeleton. It localises to the filopodium tip. The protein localises to the cell cortex. Its subcellular location is the filopodium membrane. Myosins are actin-based motor molecules with ATPase activity. Unconventional myosins serve in intracellular movements. MYO10 binds to actin filaments and actin bundles and functions as a plus end-directed motor. Moves with higher velocity and takes larger steps on actin bundles than on single actin filaments. The tail domain binds to membranous compartments containing phosphatidylinositol 3,4,5-trisphosphate, which are then moved relative to actin filaments. Regulates cell shape, cell spreading and cell adhesion. Stimulates the formation and elongation of filopodia. In hippocampal neurons it induces the formation of dendritic filopodia by trafficking the actin-remodeling protein VASP to the tips of filopodia, where it promotes actin elongation. Plays a role in formation of the podosome belt in osteoclasts. The sequence is that of Unconventional myosin-X (MYO10) from Bos taurus (Bovine).